Consider the following 860-residue polypeptide: Alanine--tRNA ligase (860 aa).

Zn(2+)-binding residues include H553, H557, C655, and H659.

This sequence belongs to the class-II aminoacyl-tRNA synthetase family. It depends on Zn(2+) as a cofactor.

It localises to the cytoplasm. It carries out the reaction tRNA(Ala) + L-alanine + ATP = L-alanyl-tRNA(Ala) + AMP + diphosphate. In terms of biological role, catalyzes the attachment of alanine to tRNA(Ala) in a two-step reaction: alanine is first activated by ATP to form Ala-AMP and then transferred to the acceptor end of tRNA(Ala). Also edits incorrectly charged Ser-tRNA(Ala) and Gly-tRNA(Ala) via its editing domain. The sequence is that of Alanine--tRNA ligase from Legionella pneumophila (strain Lens).